The following is a 571-amino-acid chain: Medium/long-chain-fatty-acid--CoA ligase FadD8 (571 aa).

Residues 1–22 (MSTAGDDAVGVPPACGGRSDAV) are disordered.

This sequence belongs to the ATP-dependent AMP-binding enzyme family.

It carries out the reaction a medium-chain fatty acid + ATP + CoA = a medium-chain fatty acyl-CoA + AMP + diphosphate. It catalyses the reaction a long-chain fatty acid + ATP + CoA = a long-chain fatty acyl-CoA + AMP + diphosphate. The enzyme catalyses hexanoate + ATP + CoA = hexanoyl-CoA + AMP + diphosphate. The catalysed reaction is dodecanoate + ATP + CoA = dodecanoyl-CoA + AMP + diphosphate. It carries out the reaction hexadecanoate + ATP + CoA = hexadecanoyl-CoA + AMP + diphosphate. The protein operates within lipid metabolism; fatty acid metabolism. Functionally, catalyzes the activation of medium/long-chain fatty acids as acyl-coenzyme A (acyl-CoA). In Mycobacterium tuberculosis (strain ATCC 25618 / H37Rv), this protein is Medium/long-chain-fatty-acid--CoA ligase FadD8.